A 688-amino-acid chain; its full sequence is Envelope glycoprotein gp70 (688 aa).

Over residues 1–15 the composition is skewed to polar residues; it reads MPNHQSGSPTGSSDL. The interval 1-31 is disordered; it reads MPNHQSGSPTGSSDLLLSGKKQRPHLALRRK. An N-terminal signal peptide occupies residues 1-98; that stretch reads MPNHQSGSPT…SVLGPPPVTG (98 aa). A compositionally biased stretch (basic residues) spans 20–31; that stretch reads KKQRPHLALRRK. The Extracellular segment spans residues 99 to 624; the sequence is ESYWAYLPKP…ALNPLDWTQY (526 aa). N-linked (GlcNAc...) asparagine; by host glycans are attached at residues asparagine 127 and asparagine 143. A coiled-coil region spans residues 426 to 474; sequence LLPVDIGDEPWFDDSAIQTFRYATDLIRAKRFVAAIILGISALIAIITS. Residues 455–456 constitute a propeptide that is removed on maturation; that stretch reads KR. Positions 457–477 are fusion peptide; the sequence is FVAAIILGISALIAIITSFAV. Positions 463 to 481 are immunosuppression; the sequence is LGISALIAIITSFAVATTA. Asparagine 498 is a glycosylation site (N-linked (GlcNAc...) asparagine; by host). Positions 511–541 form a coiled coil; it reads LKLEARLNALEEVVLELGQDVANLKTRMSTR. N-linked (GlcNAc...) asparagine; by host glycosylation occurs at asparagine 557. A helical transmembrane segment spans residues 625-645; that stretch reads FIFIGVGALLLVIVLMIFPIV. Residues 646–688 are Cytoplasmic-facing; the sequence is FQCLAKSLDQVQSDLNVLLLKKKKGGNAAPAAEMVELPRVSYT.

In terms of assembly, the mature envelope protein (Env) consists of a trimer of SU-TM heterodimers attached by noncovalent interactions or by a labile interchain disulfide bond. Post-translationally, specific enzymatic cleavages in vivo yield mature proteins. Envelope glycoproteins are synthesized as an inactive precursor that is N-glycosylated and processed likely by host cell furin or by a furin-like protease in the Golgi to yield the mature SU and TM proteins. The cleavage site between SU and TM requires the minimal sequence [KR]-X-[KR]-R.

The protein localises to the virion membrane. It localises to the host cell membrane. Functionally, the surface protein (SU) attaches the virus to the host cell by binding to its receptor. This interaction triggers the refolding of the transmembrane protein (TM) and is thought to activate its fusogenic potential by unmasking its fusion peptide. Fusion occurs at the host cell plasma membrane. The transmembrane protein (TM) acts as a class I viral fusion protein. Under the current model, the protein has at least 3 conformational states: pre-fusion native state, pre-hairpin intermediate state, and post-fusion hairpin state. During viral and target cell membrane fusion, the coiled coil regions (heptad repeats) assume a trimer-of-hairpins structure, positioning the fusion peptide in close proximity to the C-terminal region of the ectodomain. The formation of this structure appears to drive apposition and subsequent fusion of viral and target cell membranes. Membranes fusion leads to delivery of the nucleocapsid into the cytoplasm. In Mus musculus (Mouse), this protein is Envelope glycoprotein gp70 (env).